We begin with the raw amino-acid sequence, 421 residues long: Testin (421 aa).

The PET domain maps to 92 to 199 (MILTNPVPAK…GDVKLPSEMD (108 aa)). Residues 135 to 165 (QPVAGSEGAQYRKKQLAKQLPEHDQDPSKCH) are disordered. Residues 154–165 (LPEHDQDPSKCH) are compositionally biased toward basic and acidic residues. 3 consecutive LIM zinc-binding domains span residues 234 to 297 (YSCY…CDSE), 299 to 359 (PRCA…NHAV), and 362 to 421 (QGCH…KMMS).

It belongs to the prickle / espinas / testin family. Interacts via LIM domain 1 with ZYX. Interacts (via LIM domain 3) with ENAH and VASP. Interacts with ALKBH4, talin, actin, alpha-actinin, GRIP1 and PXN. Interacts (via LIM domain 2) with ACTL7A (via N-terminus). Heterodimer with ACTL7A; the heterodimer interacts with ENAH to form a heterotrimer.

It localises to the cytoplasm. Its subcellular location is the cell junction. The protein resides in the focal adhesion. Functionally, scaffold protein that may play a role in cell adhesion, cell spreading and in the reorganization of the actin cytoskeleton. Plays a role in the regulation of cell proliferation. May act as a tumor suppressor. The chain is Testin (TES) from Dasypus novemcinctus (Nine-banded armadillo).